We begin with the raw amino-acid sequence, 269 residues long: Diaminopimelate epimerase (269 aa).

Asn15 and Asn66 together coordinate substrate. The active-site Proton donor is the Cys75. Residues 76 to 77 (GN), Asn152, Asn185, and 203 to 204 (ER) each bind substrate. Catalysis depends on Cys212, which acts as the Proton acceptor. 213–214 (GT) is a substrate binding site.

Belongs to the diaminopimelate epimerase family. In terms of assembly, homodimer.

The protein resides in the cytoplasm. It carries out the reaction (2S,6S)-2,6-diaminopimelate = meso-2,6-diaminopimelate. It participates in amino-acid biosynthesis; L-lysine biosynthesis via DAP pathway; DL-2,6-diaminopimelate from LL-2,6-diaminopimelate: step 1/1. Catalyzes the stereoinversion of LL-2,6-diaminopimelate (L,L-DAP) to meso-diaminopimelate (meso-DAP), a precursor of L-lysine and an essential component of the bacterial peptidoglycan. The protein is Diaminopimelate epimerase of Parabacteroides distasonis (strain ATCC 8503 / DSM 20701 / CIP 104284 / JCM 5825 / NCTC 11152).